Here is a 159-residue protein sequence, read N- to C-terminus: Protein US8.5 (159 aa).

The disordered stretch occupies residues 27–107; sequence SSQPLDPEGP…APSPHPRPPG (81 aa). Over residues 80-91 the composition is skewed to basic and acidic residues; sequence SDERGPPRHDRP.

Belongs to the HHV-1 US8.5 protein family. In terms of processing, phosphorylated.

The protein localises to the host nucleus. It is found in the host nucleolus. In Human herpesvirus 1 (strain 17) (HHV-1), this protein is Protein US8.5.